The following is a 190-amino-acid chain: UPF0301 protein DP2218 (190 aa).

The protein belongs to the UPF0301 (AlgH) family.

The chain is UPF0301 protein DP2218 from Desulfotalea psychrophila (strain LSv54 / DSM 12343).